The sequence spans 308 residues: Acetyl-coenzyme A carboxylase carboxyl transferase subunit beta (308 aa).

The CoA carboxyltransferase N-terminal domain maps to Val25–Pro294. The Zn(2+) site is built by Cys29, Cys32, Cys48, and Cys51. The C4-type zinc-finger motif lies at Cys29–Cys51.

The protein belongs to the AccD/PCCB family. As to quaternary structure, acetyl-CoA carboxylase is a heterohexamer composed of biotin carboxyl carrier protein (AccB), biotin carboxylase (AccC) and two subunits each of ACCase subunit alpha (AccA) and ACCase subunit beta (AccD). Requires Zn(2+) as cofactor.

The protein localises to the cytoplasm. The catalysed reaction is N(6)-carboxybiotinyl-L-lysyl-[protein] + acetyl-CoA = N(6)-biotinyl-L-lysyl-[protein] + malonyl-CoA. The protein operates within lipid metabolism; malonyl-CoA biosynthesis; malonyl-CoA from acetyl-CoA: step 1/1. In terms of biological role, component of the acetyl coenzyme A carboxylase (ACC) complex. Biotin carboxylase (BC) catalyzes the carboxylation of biotin on its carrier protein (BCCP) and then the CO(2) group is transferred by the transcarboxylase to acetyl-CoA to form malonyl-CoA. In Vibrio vulnificus (strain CMCP6), this protein is Acetyl-coenzyme A carboxylase carboxyl transferase subunit beta.